The sequence spans 1368 residues: DNA-directed RNA polymerase subunit beta (1368 aa).

It belongs to the RNA polymerase beta chain family. As to quaternary structure, the RNAP catalytic core consists of 2 alpha, 1 beta, 1 beta' and 1 omega subunit. When a sigma factor is associated with the core the holoenzyme is formed, which can initiate transcription.

It catalyses the reaction RNA(n) + a ribonucleoside 5'-triphosphate = RNA(n+1) + diphosphate. In terms of biological role, DNA-dependent RNA polymerase catalyzes the transcription of DNA into RNA using the four ribonucleoside triphosphates as substrates. In Herminiimonas arsenicoxydans, this protein is DNA-directed RNA polymerase subunit beta.